The chain runs to 239 residues: Putative glutamine amidotransferase-like protein YfeJ (239 aa).

One can recognise a Glutamine amidotransferase type-1 domain in the interval 1 to 200; that stretch reads MRVHFVVHES…IQHSQQELAD (200 aa).

This chain is Putative glutamine amidotransferase-like protein YfeJ (yfeJ), found in Salmonella typhimurium (strain LT2 / SGSC1412 / ATCC 700720).